The sequence spans 799 residues: Homeobox protein engrailed (799 aa).

Disordered regions lie at residues 189–331, 369–444, 554–664, and 678–705; these read LPSR…DATK, GNFL…SLRQ, HPFL…DKAK, and SDRPSSGPRSRKPKRSKAQDEKRPRTAF. The span at 210–222 shows a compositional bias: polar residues; sequence QSPSTSIRSNLVS. 2 stretches are compositionally biased toward basic and acidic residues: residues 228-239 and 246-256; these read SRRDDQETSDSC and RAINDSERYDV. Polar residues-rich tracts occupy residues 284 to 299 and 377 to 401; these read LNLTTTGGDSVSQLFH and HTFQPNEDHQTVSSAQTTPRFSSPD. Residues 416 to 431 show a composition bias toward low complexity; sequence ESLSSPSSSSSSSRSS. Basic and acidic residues-rich tracts occupy residues 608 to 619 and 629 to 648; these read DQKKRSRDESAS and VHLKENSQKSDPVLKQEKGN. A DNA-binding region (homeobox) is located at residues 698–757; it reads EKRPRTAFTNDQLQRLKREFDECRYLTETRRKNLADELGLTESQIKIWFQNKRAKIKKSV.

It belongs to the engrailed homeobox family. In terms of tissue distribution, expressed in the dorsal ectoderm of early gastrulae in a band corresponding to the peripheral area of the presumptive shell gland. Also expressed at four points along the posterior ectoderm. In late gastrulae, it is predominantly expressed in the peripheral ectoderm of the shell gland and in spots at the posterior end behind the presumptive foot. Expressed in late trochophore larvae at four points behind the foot, at two locations at the base of the foot and in the peripheral ectoderm of the shell gland.

It localises to the nucleus. Its function is as follows. May be involved in shell and shell gland formation during development. This Lymnaea stagnalis (Great pond snail) protein is Homeobox protein engrailed.